The chain runs to 465 residues: Tapasin (465 aa).

An N-terminal signal peptide occupies residues 1–23 (MKPLLLLVAVALGLATVVSVVSA). At 24–416 (GPEAIECWFV…GFSGPSIEDG (393 aa)) the chain is on the lumenal side. Residues Cys-30 and Cys-94 are joined by a disulfide bond. Asn-256 carries N-linked (GlcNAc...) asparagine glycosylation. The Ig-like C1-type domain maps to 295-402 (PRVSLTPAPV…PASGRSADVT (108 aa)). Cysteines 318 and 385 form a disulfide. The chain crosses the membrane as a helical span at residues 417–437 (IGLFLSAFLLLGLLKVLGWLA). At 438–465 (AYWTIPEVSKEKATAASLTIPRNSKKSQ) the chain is on the cytoplasmic side.

In terms of assembly, heterodimer with PDIA3; disulfide-linked. Obligatory mediator for the interaction between newly assembled MHC class I molecules, calreticulin, PDIA3 and TAP. Up to 4 MHC class I/tapasin complexes bind to 1 TAP. Interacts with HLA-G-B2M complex; this interaction is required for loading of high affinity peptides. On its own or as part of MHC class I peptide loading complex, interacts with ligand-free MR1 or MR1-B2M complex, providing for stable MR1 pools ready for metabolite antigen processing.

Its subcellular location is the endoplasmic reticulum membrane. In terms of biological role, involved in the association of MHC class I with transporter associated with antigen processing (TAP) and in the assembly of MHC class I with peptide (peptide loading). In Mus musculus (Mouse), this protein is Tapasin (Tapbp).